Here is a 229-residue protein sequence, read N- to C-terminus: Ribose-5-phosphate isomerase A (229 aa).

Residues 28 to 31 (TGST), 85 to 88 (DGAD), and 98 to 101 (KGRG) contribute to the substrate site. E107 (proton acceptor) is an active-site residue. K125 contacts substrate.

It belongs to the ribose 5-phosphate isomerase family. Homodimer.

It catalyses the reaction aldehydo-D-ribose 5-phosphate = D-ribulose 5-phosphate. The protein operates within carbohydrate degradation; pentose phosphate pathway; D-ribose 5-phosphate from D-ribulose 5-phosphate (non-oxidative stage): step 1/1. Functionally, catalyzes the reversible conversion of ribose-5-phosphate to ribulose 5-phosphate. The chain is Ribose-5-phosphate isomerase A from Pyrococcus furiosus (strain ATCC 43587 / DSM 3638 / JCM 8422 / Vc1).